Consider the following 196-residue polypeptide: dTTP/UTP pyrophosphatase (196 aa).

Asp-72 serves as the catalytic Proton acceptor.

The protein belongs to the Maf family. YhdE subfamily. The cofactor is a divalent metal cation.

The protein resides in the cytoplasm. It carries out the reaction dTTP + H2O = dTMP + diphosphate + H(+). The enzyme catalyses UTP + H2O = UMP + diphosphate + H(+). Functionally, nucleoside triphosphate pyrophosphatase that hydrolyzes dTTP and UTP. May have a dual role in cell division arrest and in preventing the incorporation of modified nucleotides into cellular nucleic acids. This chain is dTTP/UTP pyrophosphatase, found in Chlamydia trachomatis serovar A (strain ATCC VR-571B / DSM 19440 / HAR-13).